A 76-amino-acid polypeptide reads, in one-letter code: MSKAHPPEVKKYMDKRMMLKLNGGRAVTGILRGFDPFMNVVLDDTVEECKDNTKNNIGMVVIRGNSIVMVEALDRV.

Positions 4–76 (AHPPEVKKYM…IVMVEALDRV (73 aa)) constitute a Sm domain.

This sequence belongs to the snRNP Sm proteins family. As to quaternary structure, interacts with the SMN complex. Core component of the spliceosomal U1, U2, U4 and U5 small nuclear ribonucleoproteins (snRNPs), the building blocks of the spliceosome. Most spliceosomal snRNPs contain a common set of Sm proteins, SNRPB, SNRPD1, SNRPD2, SNRPD3, SNRPE, SNRPF and SNRPG that assemble in a heptameric protein ring on the Sm site of the small nuclear RNA to form the core snRNP. Component of the U1 snRNP. Component of the U4/U6-U5 tri-snRNP complex. Component of the U7 snRNP complex. Component of the U11/U12 snRNPs that are part of the U12-type spliceosome.

The protein localises to the cytoplasm. It is found in the cytosol. The protein resides in the nucleus. Plays a role in pre-mRNA splicing as a core component of the spliceosomal U1, U2, U4 and U5 small nuclear ribonucleoproteins (snRNPs), the building blocks of the spliceosome. Component of both the pre-catalytic spliceosome B complex and activated spliceosome C complexes. Is also a component of the minor U12 spliceosome. In Drosophila melanogaster (Fruit fly), this protein is Probable small nuclear ribonucleoprotein G.